A 276-amino-acid polypeptide reads, in one-letter code: Microtubule-associated protein RP/EB family member 1A (276 aa).

Residues 13-115 (FVGRNEILTW…FLQWLKRFCD (103 aa)) enclose the Calponin-homology (CH) domain. The interval 124–172 (ENYNPVERRSRNGKERSVKGSNKIPKSLQTNNNHPPPNSSSVGLSKASG) is disordered. A compositionally biased stretch (basic and acidic residues) spans 129-141 (VERRSRNGKERSV). Residues 162–172 (SSSVGLSKASG) show a composition bias toward low complexity. Residues 173–243 (PKSAKAAEVQ…LYATDANESA (71 aa)) form the EB1 C-terminal domain. Positions 252–276 (NQSLGVEDDEAEGNGEQLEEEKTQA) are disordered. Acidic residues predominate over residues 257–270 (VEDDEAEGNGEQLE).

Belongs to the MAPRE family. As to quaternary structure, homodimer and heterodimer with EB1B. Interacts with tobamovirus movement protein. In terms of tissue distribution, highly expressed in guard cells of leaf stomata, pollen grains and pollen tubes. Expressed in young roots.

Its subcellular location is the cytoplasm. It localises to the cytoskeleton. It is found in the spindle pole. The protein localises to the phragmoplast. Functionally, binds to the plus end of microtubules and regulates the dynamics of the microtubule cytoskeleton. May be involved in anchoring microtubules to their nucleation sites and/or functioning as a reservoir for distribution to the growing end. In plants, microtubule minus ends are not necessarily severed from the nucleation site and transported to the plus end of a microtubule as part of the recycling process. May play a role in endomembrane organization during polarized growth of plant cells. Interacts with the tobamovirus movement protein (MP) and may play a role in the association of MP with the microtubule system during infection. The sequence is that of Microtubule-associated protein RP/EB family member 1A (EB1A) from Arabidopsis thaliana (Mouse-ear cress).